Reading from the N-terminus, the 869-residue chain is Valine--tRNA ligase (869 aa).

The 'HIGH' region signature appears at 47–57 (PYPTGNFHIGN). The short motif at 521-525 (KMSKS) is the 'KMSKS' region element. Lysine 524 contacts ATP.

Belongs to the class-I aminoacyl-tRNA synthetase family. ValS type 2 subfamily.

Its subcellular location is the cytoplasm. It carries out the reaction tRNA(Val) + L-valine + ATP = L-valyl-tRNA(Val) + AMP + diphosphate. Functionally, catalyzes the attachment of valine to tRNA(Val). As ValRS can inadvertently accommodate and process structurally similar amino acids such as threonine, to avoid such errors, it has a 'posttransfer' editing activity that hydrolyzes mischarged Thr-tRNA(Val) in a tRNA-dependent manner. The sequence is that of Valine--tRNA ligase from Methanosarcina barkeri (strain Fusaro / DSM 804).